A 177-amino-acid chain; its full sequence is Large ribosomal subunit protein uL6 (177 aa).

Belongs to the universal ribosomal protein uL6 family. Part of the 50S ribosomal subunit.

Functionally, this protein binds to the 23S rRNA, and is important in its secondary structure. It is located near the subunit interface in the base of the L7/L12 stalk, and near the tRNA binding site of the peptidyltransferase center. The protein is Large ribosomal subunit protein uL6 of Idiomarina loihiensis (strain ATCC BAA-735 / DSM 15497 / L2-TR).